A 419-amino-acid polypeptide reads, in one-letter code: UDP-N-acetylglucosamine 1-carboxyvinyltransferase (419 aa).

Phosphoenolpyruvate is bound at residue 22–23; it reads KN. Arginine 91 provides a ligand contact to UDP-N-acetyl-alpha-D-glucosamine. Cysteine 115 functions as the Proton donor in the catalytic mechanism. Cysteine 115 is subject to 2-(S-cysteinyl)pyruvic acid O-phosphothioketal. Residues 120–124, 160–163, aspartate 305, and valine 327 contribute to the UDP-N-acetyl-alpha-D-glucosamine site; these read RPVDL and KVSV.

The protein belongs to the EPSP synthase family. MurA subfamily.

It is found in the cytoplasm. The catalysed reaction is phosphoenolpyruvate + UDP-N-acetyl-alpha-D-glucosamine = UDP-N-acetyl-3-O-(1-carboxyvinyl)-alpha-D-glucosamine + phosphate. It participates in cell wall biogenesis; peptidoglycan biosynthesis. In terms of biological role, cell wall formation. Adds enolpyruvyl to UDP-N-acetylglucosamine. The sequence is that of UDP-N-acetylglucosamine 1-carboxyvinyltransferase from Salmonella dublin (strain CT_02021853).